A 249-amino-acid chain; its full sequence is Probable transcriptional regulatory protein AB57_1731 (249 aa).

It belongs to the TACO1 family.

The protein localises to the cytoplasm. This chain is Probable transcriptional regulatory protein AB57_1731, found in Acinetobacter baumannii (strain AB0057).